The chain runs to 195 residues: SXP/RAL-2-like protein 2 (195 aa).

The segment at 162-195 (EKVHGGSHGGLRGGPGGPRDGPRGGPRGGPRGGR) is disordered. Over residues 167-195 (GSHGGLRGGPGGPRDGPRGGPRGGPRGGR) the composition is skewed to gly residues.

It belongs to the SXP/RAL-2 family.

In Caenorhabditis elegans, this protein is SXP/RAL-2-like protein 2.